A 156-amino-acid chain; its full sequence is MKIKKMKIKTINLKIEELINISKNTLFVKNNSSPFFTFDESTCLGYQTIHYSGTDNQKYYIFLLGIKLFRCNKYHLNVIFYNKISNTVERFEPFGNDNKSNSWNIKIFIIKQICNIFNLSKSPIYYDNIQSVLKHNSTDCVFLCLKHLKILLNDLL.

This is an uncharacterized protein from Acheta domesticus (House cricket).